The following is a 201-amino-acid chain: Large ribosomal subunit protein uL18 (201 aa).

This sequence belongs to the universal ribosomal protein uL18 family. In terms of assembly, part of the 50S ribosomal subunit. Contacts the 5S and 23S rRNAs.

In terms of biological role, this is one of the proteins that bind and probably mediate the attachment of the 5S RNA into the large ribosomal subunit, where it forms part of the central protuberance. The polypeptide is Large ribosomal subunit protein uL18 (Thermococcus gammatolerans (strain DSM 15229 / JCM 11827 / EJ3)).